Consider the following 124-residue polypeptide: Holo-[acyl-carrier-protein] synthase (124 aa).

Residues aspartate 7 and glutamate 55 each contribute to the Mg(2+) site.

This sequence belongs to the P-Pant transferase superfamily. AcpS family. It depends on Mg(2+) as a cofactor.

The protein resides in the cytoplasm. It carries out the reaction apo-[ACP] + CoA = holo-[ACP] + adenosine 3',5'-bisphosphate + H(+). Functionally, transfers the 4'-phosphopantetheine moiety from coenzyme A to a Ser of acyl-carrier-protein. This Borreliella afzelii (strain PKo) (Borrelia afzelii) protein is Holo-[acyl-carrier-protein] synthase.